Here is a 180-residue protein sequence, read N- to C-terminus: ATP synthase subunit delta (180 aa).

The protein belongs to the ATPase delta chain family. As to quaternary structure, F-type ATPases have 2 components, F(1) - the catalytic core - and F(0) - the membrane proton channel. F(1) has five subunits: alpha(3), beta(3), gamma(1), delta(1), epsilon(1). F(0) has three main subunits: a(1), b(2) and c(10-14). The alpha and beta chains form an alternating ring which encloses part of the gamma chain. F(1) is attached to F(0) by a central stalk formed by the gamma and epsilon chains, while a peripheral stalk is formed by the delta and b chains.

It is found in the cell inner membrane. Its function is as follows. F(1)F(0) ATP synthase produces ATP from ADP in the presence of a proton or sodium gradient. F-type ATPases consist of two structural domains, F(1) containing the extramembraneous catalytic core and F(0) containing the membrane proton channel, linked together by a central stalk and a peripheral stalk. During catalysis, ATP synthesis in the catalytic domain of F(1) is coupled via a rotary mechanism of the central stalk subunits to proton translocation. In terms of biological role, this protein is part of the stalk that links CF(0) to CF(1). It either transmits conformational changes from CF(0) to CF(1) or is implicated in proton conduction. This Legionella pneumophila subsp. pneumophila (strain Philadelphia 1 / ATCC 33152 / DSM 7513) protein is ATP synthase subunit delta.